We begin with the raw amino-acid sequence, 96 residues long: Large ribosomal subunit protein eL43 (96 aa).

The segment at 41–62 (CPVCAFPKLKRAGTSIWVCDKC) adopts a C4-type zinc-finger fold.

This sequence belongs to the eukaryotic ribosomal protein eL43 family. Requires Zn(2+) as cofactor.

In Methanococcus vannielii (strain ATCC 35089 / DSM 1224 / JCM 13029 / OCM 148 / SB), this protein is Large ribosomal subunit protein eL43.